The sequence spans 308 residues: Ribonuclease HIII (308 aa).

The region spanning 91-308 is the RNase H type-2 domain; it reads KNVIGSDEVG…TEKALKMVKK (218 aa). A divalent metal cation is bound by residues aspartate 97, glutamate 98, and aspartate 202.

The protein belongs to the RNase HII family. RnhC subfamily. Mn(2+) serves as cofactor. The cofactor is Mg(2+).

The protein resides in the cytoplasm. The enzyme catalyses Endonucleolytic cleavage to 5'-phosphomonoester.. Endonuclease that specifically degrades the RNA of RNA-DNA hybrids. In Listeria monocytogenes serotype 4b (strain CLIP80459), this protein is Ribonuclease HIII.